Here is a 374-residue protein sequence, read N- to C-terminus: Alanine racemase (374 aa).

K40 functions as the Proton acceptor; specific for D-alanine in the catalytic mechanism. K40 carries the N6-(pyridoxal phosphate)lysine modification. R139 lines the substrate pocket. Y261 (proton acceptor; specific for L-alanine) is an active-site residue. Position 309 (M309) interacts with substrate.

Belongs to the alanine racemase family. The cofactor is pyridoxal 5'-phosphate.

The catalysed reaction is L-alanine = D-alanine. The protein operates within amino-acid biosynthesis; D-alanine biosynthesis; D-alanine from L-alanine: step 1/1. Catalyzes the interconversion of L-alanine and D-alanine. May also act on other amino acids. This is Alanine racemase (alr) from Rhodospirillum rubrum (strain ATCC 11170 / ATH 1.1.1 / DSM 467 / LMG 4362 / NCIMB 8255 / S1).